We begin with the raw amino-acid sequence, 484 residues long: Glutamyl-tRNA(Gln) amidotransferase subunit A (484 aa).

Catalysis depends on charge relay system residues Lys-76 and Ser-151. Ser-175 acts as the Acyl-ester intermediate in catalysis.

It belongs to the amidase family. GatA subfamily. As to quaternary structure, heterotrimer of A, B and C subunits.

It catalyses the reaction L-glutamyl-tRNA(Gln) + L-glutamine + ATP + H2O = L-glutaminyl-tRNA(Gln) + L-glutamate + ADP + phosphate + H(+). Functionally, allows the formation of correctly charged Gln-tRNA(Gln) through the transamidation of misacylated Glu-tRNA(Gln) in organisms which lack glutaminyl-tRNA synthetase. The reaction takes place in the presence of glutamine and ATP through an activated gamma-phospho-Glu-tRNA(Gln). The chain is Glutamyl-tRNA(Gln) amidotransferase subunit A from Hahella chejuensis (strain KCTC 2396).